Reading from the N-terminus, the 1581-residue chain is Pentafunctional AROM polypeptide (1581 aa).

The tract at residues 1 to 384 (MPEPTKISIL…YEPKASVVPN (384 aa)) is 3-dehydroquinate synthase. NAD(+)-binding positions include 44-46 (DTN), 81-84 (EVSK), 114-116 (GGV), and Asp-119. 7-phospho-2-dehydro-3-deoxy-D-arabino-heptonate is bound at residue Arg-130. Position 139–140 (139–140 (TT)) interacts with NAD(+). Residues Asp-146 and Lys-152 each contribute to the 7-phospho-2-dehydro-3-deoxy-D-arabino-heptonate site. Position 161 (Lys-161) interacts with NAD(+). Asn-162 serves as a coordination point for 7-phospho-2-dehydro-3-deoxy-D-arabino-heptonate. NAD(+)-binding positions include 179–182 (FLET) and Asn-190. Position 194 (Glu-194) interacts with Zn(2+). Residues 194–197 (EVIK) and Lys-250 contribute to the 7-phospho-2-dehydro-3-deoxy-D-arabino-heptonate site. Glu-260 serves as the catalytic Proton acceptor; for 3-dehydroquinate synthase activity. 7-phospho-2-dehydro-3-deoxy-D-arabino-heptonate-binding positions include 264–268 (RNLLN) and His-271. His-271 is a Zn(2+) binding site. His-275 functions as the Proton acceptor; for 3-dehydroquinate synthase activity in the catalytic mechanism. Residues His-287 and Lys-356 each coordinate 7-phospho-2-dehydro-3-deoxy-D-arabino-heptonate. A Zn(2+)-binding site is contributed by His-287. The tract at residues 397 to 842 (VHPGVPKESN…WDTLRQLFSV (446 aa)) is EPSP synthase. Cys-824 (for EPSP synthase activity) is an active-site residue. The shikimate kinase stretch occupies residues 864–1056 (SASVFIIGMR…KQKKHSFFVS (193 aa)). 871 to 878 (GMRGAGKT) lines the ATP pocket. Residues 1057–1277 (LTLPDLRSAS…AAPGQLSATE (221 aa)) form a 3-dehydroquinase region. His-1180 functions as the Proton acceptor; for 3-dehydroquinate dehydratase activity in the catalytic mechanism. Lys-1208 functions as the Schiff-base intermediate with substrate; for 3-dehydroquinate dehydratase activity in the catalytic mechanism. The tract at residues 1290 to 1581 (KKRFAIFGNP…ARTAVLGDSA (292 aa)) is shikimate dehydrogenase.

This sequence in the N-terminal section; belongs to the sugar phosphate cyclases superfamily. Dehydroquinate synthase family. In the 2nd section; belongs to the EPSP synthase family. It in the 3rd section; belongs to the shikimate kinase family. The protein in the 4th section; belongs to the type-I 3-dehydroquinase family. This sequence in the C-terminal section; belongs to the shikimate dehydrogenase family. In terms of assembly, homodimer. Requires Zn(2+) as cofactor.

Its subcellular location is the cytoplasm. It carries out the reaction 7-phospho-2-dehydro-3-deoxy-D-arabino-heptonate = 3-dehydroquinate + phosphate. It catalyses the reaction 3-dehydroquinate = 3-dehydroshikimate + H2O. The catalysed reaction is shikimate + NADP(+) = 3-dehydroshikimate + NADPH + H(+). The enzyme catalyses shikimate + ATP = 3-phosphoshikimate + ADP + H(+). It carries out the reaction 3-phosphoshikimate + phosphoenolpyruvate = 5-O-(1-carboxyvinyl)-3-phosphoshikimate + phosphate. The protein operates within metabolic intermediate biosynthesis; chorismate biosynthesis; chorismate from D-erythrose 4-phosphate and phosphoenolpyruvate: step 2/7. It functions in the pathway metabolic intermediate biosynthesis; chorismate biosynthesis; chorismate from D-erythrose 4-phosphate and phosphoenolpyruvate: step 3/7. It participates in metabolic intermediate biosynthesis; chorismate biosynthesis; chorismate from D-erythrose 4-phosphate and phosphoenolpyruvate: step 4/7. Its pathway is metabolic intermediate biosynthesis; chorismate biosynthesis; chorismate from D-erythrose 4-phosphate and phosphoenolpyruvate: step 5/7. The protein operates within metabolic intermediate biosynthesis; chorismate biosynthesis; chorismate from D-erythrose 4-phosphate and phosphoenolpyruvate: step 6/7. Functionally, the AROM polypeptide catalyzes 5 consecutive enzymatic reactions in prechorismate polyaromatic amino acid biosynthesis. The protein is Pentafunctional AROM polypeptide of Aspergillus terreus (strain NIH 2624 / FGSC A1156).